The primary structure comprises 322 residues: Undecaprenyl-phosphate 4-deoxy-4-formamido-L-arabinose transferase (322 aa).

At methionine 1–methionine 235 the chain is on the cytoplasmic side. A helical transmembrane segment spans residues leucine 236 to isoleucine 256. Residues leucine 257–glycine 269 lie on the Periplasmic side of the membrane. The helical transmembrane segment at valine 270–leucine 290 threads the bilayer. Topologically, residues leucine 291–glutamate 322 are cytoplasmic.

Belongs to the glycosyltransferase 2 family.

The protein localises to the cell inner membrane. It carries out the reaction UDP-4-deoxy-4-formamido-beta-L-arabinose + di-trans,octa-cis-undecaprenyl phosphate = 4-deoxy-4-formamido-alpha-L-arabinopyranosyl di-trans,octa-cis-undecaprenyl phosphate + UDP. It functions in the pathway glycolipid biosynthesis; 4-amino-4-deoxy-alpha-L-arabinose undecaprenyl phosphate biosynthesis; 4-amino-4-deoxy-alpha-L-arabinose undecaprenyl phosphate from UDP-4-deoxy-4-formamido-beta-L-arabinose and undecaprenyl phosphate: step 1/2. It participates in bacterial outer membrane biogenesis; lipopolysaccharide biosynthesis. In terms of biological role, catalyzes the transfer of 4-deoxy-4-formamido-L-arabinose from UDP to undecaprenyl phosphate. The modified arabinose is attached to lipid A and is required for resistance to polymyxin and cationic antimicrobial peptides. The protein is Undecaprenyl-phosphate 4-deoxy-4-formamido-L-arabinose transferase of Escherichia coli O7:K1 (strain IAI39 / ExPEC).